The following is a 238-amino-acid chain: 4-hydroxy-tetrahydrodipicolinate reductase (238 aa).

12–17 (GASGRM) is a binding site for NAD(+). Residue Arg40 coordinates NADP(+). NAD(+) is bound by residues 93–95 (GTT) and 117–120 (ASNF). His149 serves as the catalytic Proton donor/acceptor. His150 is a binding site for (S)-2,3,4,5-tetrahydrodipicolinate. Residue Lys153 is the Proton donor of the active site. Position 159-160 (159-160 (GT)) interacts with (S)-2,3,4,5-tetrahydrodipicolinate.

Belongs to the DapB family.

It is found in the cytoplasm. The enzyme catalyses (S)-2,3,4,5-tetrahydrodipicolinate + NAD(+) + H2O = (2S,4S)-4-hydroxy-2,3,4,5-tetrahydrodipicolinate + NADH + H(+). It catalyses the reaction (S)-2,3,4,5-tetrahydrodipicolinate + NADP(+) + H2O = (2S,4S)-4-hydroxy-2,3,4,5-tetrahydrodipicolinate + NADPH + H(+). Its pathway is amino-acid biosynthesis; L-lysine biosynthesis via DAP pathway; (S)-tetrahydrodipicolinate from L-aspartate: step 4/4. In terms of biological role, catalyzes the conversion of 4-hydroxy-tetrahydrodipicolinate (HTPA) to tetrahydrodipicolinate. The polypeptide is 4-hydroxy-tetrahydrodipicolinate reductase (Xanthomonas campestris pv. campestris (strain 8004)).